The following is a 539-amino-acid chain: CTP synthase (539 aa).

The interval 1-267 (MTKFIFVTGG…DDLVIKRLDL (267 aa)) is amidoligase domain. Ser13 is a CTP binding site. Ser13 serves as a coordination point for UTP. An ATP-binding site is contributed by 14 to 19 (SLGKGI). An L-glutamine-binding site is contributed by Tyr54. Asp71 lines the ATP pocket. Mg(2+) contacts are provided by Asp71 and Glu141. CTP-binding positions include 148-150 (DIE), 188-193 (KTKPTQ), and Lys224. UTP-binding positions include 188–193 (KTKPTQ) and Lys224. An ATP-binding site is contributed by 240-242 (RDA). The Glutamine amidotransferase type-1 domain maps to 293-535 (TIGLVGKYVS…IEAANKYKEA (243 aa)). Gly355 contacts L-glutamine. Cys382 serves as the catalytic Nucleophile; for glutamine hydrolysis. Residues 383–386 (LGMQ), Glu406, and Arg463 each bind L-glutamine. Catalysis depends on residues His508 and Glu510.

This sequence belongs to the CTP synthase family. Homotetramer.

It catalyses the reaction UTP + L-glutamine + ATP + H2O = CTP + L-glutamate + ADP + phosphate + 2 H(+). The catalysed reaction is L-glutamine + H2O = L-glutamate + NH4(+). It carries out the reaction UTP + NH4(+) + ATP = CTP + ADP + phosphate + 2 H(+). Its pathway is pyrimidine metabolism; CTP biosynthesis via de novo pathway; CTP from UDP: step 2/2. Allosterically activated by GTP, when glutamine is the substrate; GTP has no effect on the reaction when ammonia is the substrate. The allosteric effector GTP functions by stabilizing the protein conformation that binds the tetrahedral intermediate(s) formed during glutamine hydrolysis. Inhibited by the product CTP, via allosteric rather than competitive inhibition. In terms of biological role, catalyzes the ATP-dependent amination of UTP to CTP with either L-glutamine or ammonia as the source of nitrogen. Regulates intracellular CTP levels through interactions with the four ribonucleotide triphosphates. The sequence is that of CTP synthase from Staphylococcus carnosus (strain TM300).